The sequence spans 107 residues: Putative double-stranded DNA mimic protein YpsIP31758_1954 (107 aa).

The protein belongs to the putative dsDNA mimic protein family.

May act as a double-stranded DNA (dsDNA) mimic. Probably regulates the activity of a dsDNA-binding protein. This Yersinia pseudotuberculosis serotype O:1b (strain IP 31758) protein is Putative double-stranded DNA mimic protein YpsIP31758_1954.